An 86-amino-acid chain; its full sequence is Weak toxin 2 (86 aa).

The signal sequence occupies residues 1–23; it reads MKTLLLTLVVVAIVCLDLGYTLT. Intrachain disulfides connect Cys-24–Cys-45, Cys-27–Cys-32, Cys-38–Cys-63, Cys-67–Cys-78, and Cys-79–Cys-84.

It belongs to the three-finger toxin family. Ancestral subfamily. Orphan group II sub-subfamily. As to expression, expressed by the venom gland.

The protein resides in the secreted. In terms of biological role, binds with low affinity to muscular (alpha-1-beta-1-delta-epsilon/CHRNA1-CHRNB1-CHRND-CHRNE) and very low affinity to neuronal (alpha-7/CHRNA7) nicotinic acetylcholine receptor (nAChR). The sequence is that of Weak toxin 2 from Bungarus candidus (Malayan krait).